A 599-amino-acid chain; its full sequence is Adenine deaminase (599 aa).

The protein belongs to the metallo-dependent hydrolases superfamily. Adenine deaminase family. The cofactor is Mn(2+).

The catalysed reaction is adenine + H2O + H(+) = hypoxanthine + NH4(+). The chain is Adenine deaminase from Clostridium botulinum (strain Langeland / NCTC 10281 / Type F).